The sequence spans 232 residues: Fibrillarin-like rRNA/tRNA 2'-O-methyltransferase (232 aa).

Residues Thr-89–Thr-90, Glu-108–Phe-109, Asp-133–Ala-134, and Asp-153–Gln-156 each bind S-adenosyl-L-methionine.

The protein belongs to the methyltransferase superfamily. Fibrillarin family. As to quaternary structure, interacts with nop5. Component of box C/D small ribonucleoprotein (sRNP) particles that contain rpl7ae, FlpA and nop5, plus a guide RNA.

In terms of biological role, involved in pre-rRNA and tRNA processing. Utilizes the methyl donor S-adenosyl-L-methionine to catalyze the site-specific 2'-hydroxyl methylation of ribose moieties in rRNA and tRNA. Site specificity is provided by a guide RNA that base pairs with the substrate. Methylation occurs at a characteristic distance from the sequence involved in base pairing with the guide RNA. This chain is Fibrillarin-like rRNA/tRNA 2'-O-methyltransferase, found in Methanopyrus kandleri (strain AV19 / DSM 6324 / JCM 9639 / NBRC 100938).